An 834-amino-acid chain; its full sequence is Ras GTPase-activating protein 3 (834 aa).

C2 domains lie at 1–112 (MAVE…DTWF) and 123–263 (VQGK…EAWY). Residue A2 is modified to N-acetylalanine. Y66 bears the Phosphotyrosine mark. Position 77 is a phosphoserine (S77). T110 carries the post-translational modification Phosphothreonine. A Ras-GAP domain is found at 346-561 (GRVVPFISAI…DAVKNFLDLI (216 aa)). One can recognise a PH domain in the interval 576–677 (ILLKEGFMIK…WIDILTKVSQ (102 aa)). The segment at 679–715 (NQKRLTVFHPSAYLNGHWLCCRASSDTAIGCTPCTGG) adopts a Btk-type zinc-finger fold. H687, C698, C699, and C709 together coordinate Zn(2+). Residues S809 and S833 each carry the phosphoserine modification.

In terms of biological role, inhibitory regulator of the Ras-cyclic AMP pathway. Binds inositol tetrakisphosphate (IP4). The sequence is that of Ras GTPase-activating protein 3 (Rasa3) from Rattus norvegicus (Rat).